Reading from the N-terminus, the 286-residue chain is Probable alpha-ketoglutarate-dependent hypophosphite dioxygenase (286 aa).

It belongs to the PhyH family.

Functionally, required for hypophosphite oxidation. In Stutzerimonas stutzeri (Pseudomonas stutzeri), this protein is Probable alpha-ketoglutarate-dependent hypophosphite dioxygenase (htxA).